The sequence spans 189 residues: Peptidyl-tRNA hydrolase (189 aa).

Tyr-18 provides a ligand contact to tRNA. Catalysis depends on His-23, which acts as the Proton acceptor. Phe-67, Asn-69, and Asn-115 together coordinate tRNA.

The protein belongs to the PTH family. Monomer.

It is found in the cytoplasm. It catalyses the reaction an N-acyl-L-alpha-aminoacyl-tRNA + H2O = an N-acyl-L-amino acid + a tRNA + H(+). Its function is as follows. Hydrolyzes ribosome-free peptidyl-tRNAs (with 1 or more amino acids incorporated), which drop off the ribosome during protein synthesis, or as a result of ribosome stalling. Catalyzes the release of premature peptidyl moieties from peptidyl-tRNA molecules trapped in stalled 50S ribosomal subunits, and thus maintains levels of free tRNAs and 50S ribosomes. The chain is Peptidyl-tRNA hydrolase from Leptospira borgpetersenii serovar Hardjo-bovis (strain JB197).